A 926-amino-acid chain; its full sequence is Ubiquitin carboxyl-terminal hydrolase 4 (926 aa).

Residues 205-328 (SQMEILLIDI…WLKSNYGSQV (124 aa)) enclose the Rhodanese domain. Position 443 is a phosphoserine (serine 443). Residues 562–923 (VGLENLGNSC…NAYVLFYHRV (362 aa)) enclose the USP domain. Cysteine 571 serves as the catalytic Nucleophile. The active-site Proton acceptor is the histidine 880.

This sequence belongs to the peptidase C19 family. Interacts with BRO1, RFU1 and VPS32. Associates with the 26S proteasome.

The protein localises to the cytoplasm. It localises to the late endosome membrane. The enzyme catalyses Thiol-dependent hydrolysis of ester, thioester, amide, peptide and isopeptide bonds formed by the C-terminal Gly of ubiquitin (a 76-residue protein attached to proteins as an intracellular targeting signal).. With respect to regulation, RFU1 is an inhibitor of deubiquitination activity. Ubiquitin thioesterase that acts at the late endosome/prevacuolar compartment to recover ubiquitin from ubiquitinated membrane proteins en route to the vacuole. Also removes ubiquitin from soluble proteins targeted to proteasomes. Is essential to maintain a normal level of free ubiquitin. Involved in the ammonium-induced down-regulation of the GAP1 permease and the UME3 destruction in response to oxidative stress. Has a role in the RAD9 checkpoint response to TOP1 poisons. Required for promoting coordination of DNA replication and avoids DNA overreplication. This Saccharomyces cerevisiae (strain YJM789) (Baker's yeast) protein is Ubiquitin carboxyl-terminal hydrolase 4 (DOA4).